Consider the following 648-residue polypeptide: Wilms tumor protein 1-interacting protein homolog (648 aa).

Disordered regions lie at residues 27–56, 142–291, and 306–327; these read DGMYGEPNPDMEKTKRMNGSSSTPGNKVYS, SNSL…SPRS, and SPRSSISSHSSRSSRSSRGSMS. 2 stretches are compositionally biased toward low complexity: residues 158 to 171 and 178 to 192; these read SPRSSLASSHSSQD and PRSSISSPRSSLVSP. Composition is skewed to polar residues over residues 197 to 213 and 220 to 241; these read GTSVISPRSSYASTASD and PRTSLNSYDCGSKPSSNRTSGI. Over residues 252 to 267 the composition is skewed to low complexity; that stretch reads PRSSTTSPRSSYSDSR. LIM zinc-binding domains follow at residues 437-498, 502-561, and 562-631; these read GICV…SGFQ, EKCF…TVFA, and PKCA…RLKT.

This sequence belongs to the zyxin/ajuba family.

Its subcellular location is the cell junction. The protein localises to the adherens junction. The protein resides in the nucleus. In terms of biological role, may monitor slit diaphragm protein assembly, a specialized adherens junction characteristic of podocytes. In case of podocyte injury, it shuttles into the nucleus and acts as a transcription regulator. Plays a role in the regulation of cell morphology and cytoskeletal organization. Acts as a transcriptional corepressor for snai1 and snai2/slug and plays a role in regulating neural crest development. This Danio rerio (Zebrafish) protein is Wilms tumor protein 1-interacting protein homolog (wtip).